Reading from the N-terminus, the 1746-residue chain is Inactive tyrosine-protein kinase PEAK1 (1746 aa).

Residues 44-66 (KTNANHSNNHRIRNTGNFRPPVA) form a disordered region. At S281 the chain carries Phosphoserine. Disordered regions lie at residues 334–411 (QSMV…KVPE) and 489–517 (LEGP…LTPG). Over residues 338-349 (SSDSTSPDSSLT) the composition is skewed to low complexity. The segment covering 355–364 (ETASSLSQKI) has biased composition (polar residues). Residues 492-513 (PVNSPKTKSSSSTPNSPVTSSS) show a composition bias toward low complexity. S540, S572, and S587 each carry phosphoserine. The interval 551 to 577 (ITSGTGPNVPPRKNCHKSAPTSPTATN) is disordered. 2 positions are modified to phosphotyrosine: Y635 and Y641. S648 is modified (phosphoserine). At Y665 the chain carries Phosphotyrosine. 5 disordered regions span residues 671–700 (ESKV…HKRG), 713–764 (LNRG…EKAS), 802–920 (DADV…AADA), 1052–1102 (VTED…DPNP), and 1138–1158 (GKTD…LPKK). The segment covering 675-694 (PDNTTSKTTDCLQTKGFSNS) has biased composition (polar residues). Over residues 718 to 730 (SSPQRSYSSSHSS) the composition is skewed to low complexity. Polar residues-rich tracts occupy residues 748–758 (TQESQMVGSSS) and 820–841 (LFTS…PTTK). S826 and S854 each carry phosphoserine. A compositionally biased stretch (pro residues) spans 864-874 (SEPPAPFPPPR). Over residues 889–902 (HFTNWTKPTSPTRS) the composition is skewed to polar residues. S898 is modified (phosphoserine). 3 stretches are compositionally biased toward basic and acidic residues: residues 903 to 920 (TEAE…AADA), 1052 to 1062 (VTEDFSPRDPR), and 1084 to 1094 (ELEREDGKEDI). A Phosphothreonine modification is found at T1151. Position 1188 is a phosphotyrosine (Y1188). The required for homodimerization stretch occupies residues 1285–1311 (EVVGKIRSLHTDALKKLAVKCEDLFMA). Positions 1313-1675 (QKDQLRFGVD…LLWGPREDLF (363 aa)) constitute a Protein kinase domain. Residue S1374 is modified to Phosphoserine. The interval 1402–1456 (LLPWEDPDDPEKDEDDMEETEEDAKGETDGKNPKPCSEAASSQKENQGVMSKKQR) is disordered. Residues 1406–1423 (EDPDDPEKDEDDMEETEE) are compositionally biased toward acidic residues. The segment covering 1424–1433 (DAKGETDGKN) has biased composition (basic and acidic residues). Positions 1440 to 1450 (AASSQKENQGV) are enriched in polar residues. The interval 1670–1743 (PREDLFQTFT…DSLSCIVKIL (74 aa)) is required for homodimerization.

The protein belongs to the protein kinase superfamily. As to quaternary structure, homodimer. Interacts with BCAR1 and CRK. Interacts with PRAG1. Interacts (when phosphorylated at Tyr-1188) with SHC1 (via PID domain). Found in a complex with PPP1CA, PPP1CC, SHC1 and PEAK1. Interacts (when phosphorylated at Tyr-635) with tensin TNS3 (when phosphorylated on the SH2 domain); TNS3 also interacts with integrins ITGB1, ITGB3 and ITGB5 and mediates their association with PEAK1. Interacts with RASAL2 and GRB2. Phosphorylated on tyrosine in a CSK-dependent manner in response to adhesion to fibronectin and to EGF stimulation. Phosphorylation at Tyr-665 by a Src family kinase controls subcellular localization to focal adhesion and focal adhesion dynamics. Phosphorylation at Tyr-1188 is essential for binding to SHC1. Phosphorylation at Tyr-635 promotes interaction with tensin TNS3.

It is found in the cytoplasm. It localises to the cytoskeleton. The protein resides in the cell junction. Its subcellular location is the focal adhesion. Functionally, probable catalytically inactive kinase. Scaffolding protein that regulates the cytoskeleton to control cell spreading and migration by modulating focal adhesion dynamics. Acts as a scaffold for mediating EGFR signaling. The protein is Inactive tyrosine-protein kinase PEAK1 (PEAK1) of Homo sapiens (Human).